Consider the following 433-residue polypeptide: Glutamate-1-semialdehyde 2,1-aminomutase (433 aa).

Lys273 carries the N6-(pyridoxal phosphate)lysine modification.

Belongs to the class-III pyridoxal-phosphate-dependent aminotransferase family. HemL subfamily. As to quaternary structure, homodimer. Pyridoxal 5'-phosphate serves as cofactor.

Its subcellular location is the cytoplasm. It catalyses the reaction (S)-4-amino-5-oxopentanoate = 5-aminolevulinate. It functions in the pathway porphyrin-containing compound metabolism; protoporphyrin-IX biosynthesis; 5-aminolevulinate from L-glutamyl-tRNA(Glu): step 2/2. Its pathway is porphyrin-containing compound metabolism; chlorophyll biosynthesis. The chain is Glutamate-1-semialdehyde 2,1-aminomutase from Rippkaea orientalis (strain PCC 8801 / RF-1) (Cyanothece sp. (strain PCC 8801)).